The following is a 583-amino-acid chain: Phosphoglucomutase, cytoplasmic (583 aa).

A disordered region spans residues Met-1 to Gly-20. Alpha-D-glucose 1,6-bisphosphate contacts are provided by Arg-25 and Ser-124. Ser-124 (phosphoserine intermediate) is an active-site residue. Mg(2+) is bound by residues Ser-124, Asp-300, Asp-302, and Asp-304. Ser-124 carries the phosphoserine modification. Residues Asp-304, Arg-305, Thr-368, Glu-387, Ser-389, and Lys-400 each contribute to the alpha-D-glucose 1,6-bisphosphate site.

This sequence belongs to the phosphohexose mutase family. Monomer. It depends on Mg(2+) as a cofactor.

The protein localises to the cytoplasm. It carries out the reaction alpha-D-glucose 1-phosphate = alpha-D-glucose 6-phosphate. The catalysed reaction is O-phospho-L-seryl-[protein] + alpha-D-glucose 1-phosphate = alpha-D-glucose 1,6-bisphosphate + L-seryl-[protein]. The enzyme catalyses alpha-D-glucose 1,6-bisphosphate + L-seryl-[protein] = O-phospho-L-seryl-[protein] + alpha-D-glucose 6-phosphate. In terms of biological role, catalyzes the reversible isomerization of alpha-D-glucose 1-phosphate to alpha-D-glucose 6-phosphate. The mechanism proceeds via the intermediate compound alpha-D-glucose 1,6-bisphosphate. This enzyme participates in both the breakdown and synthesis of glucose. This Solanum tuberosum (Potato) protein is Phosphoglucomutase, cytoplasmic (PGM1).